Here is a 265-residue protein sequence, read N- to C-terminus: MGAAAAEADRTLFVGNLETKVTEELLFELFHQAGPVIKVKIPKDKDGKLKQFAFVNFKHEVSVPYAMNLLNGIKLFGRPIKIQFRSGSSHASQDASVSYPQHHVGNLSPTSTSPNSYERTVGNVSPTAQMVQRSFSSPEDYQRQAVMNSVFRQMSYAGKFGSPHADQLGFSPSAQPHGHTFNQSSSSQWRQDALSSQRKRQNSHPYLADRHYSREQRYSDHGSDYHYRGSREDFYYDDRNHDGWSHDYDNRRDSSRGGKWPSSRH.

G2 is modified (N-acetylglycine). One can recognise an RRM domain in the interval 10 to 87 (RTLFVGNLET…RPIKIQFRSG (78 aa)). ZCCHC8 binding stretches follow at residues 25–35 (LLFELFHQAGP) and 59–76 (HEVS…IKLF). The segment at 91-125 (ASQDASVSYPQHHVGNLSPTSTSPNSYERTVGNVS) is disordered. Residues 107-125 (LSPTSTSPNSYERTVGNVS) are compositionally biased toward polar residues. Residue S136 is modified to Phosphoserine; by MAPKAPK2. Position 137 is a phosphoserine (S137). At R152 the chain carries Omega-N-methylarginine. Disordered stretches follow at residues 166–224 (DQLG…HGSD) and 237–265 (DDRN…SSRH). The span at 170 to 196 (FSPSAQPHGHTFNQSSSSQWRQDALSS) shows a compositional bias: polar residues. At S203 the chain carries Phosphoserine. 2 stretches are compositionally biased toward basic and acidic residues: residues 207-224 (LADR…HGSD) and 237-256 (DDRN…DSSR).

In terms of assembly, component of the nuclear exosome targeting (NEXT) complex composed of MTREX, ZCCHC8, and RBM7 that directs a subset of non-coding short-lived RNAs for exosomal degradation. Interacts with ZCCHC8 and SF3B2/SAP145. Binds to MTREX through ZCCHC8. Interacts with YWHAE and YWHAZ; these interactions are stress-dependent and RBM7 phosphorylation dependent; release RNA from the NEXT complex and may affect RNA targeting to the nuclear RNA exosomome for degradation. Interacts with MEPCE and LARP7, the core subunits of 7SK snRNP; upon genotoxic stress this interaction is enhanced, triggering the release of inactive P-TEFb complex from the core and P-TEFb complex activation. In terms of processing, phosphorylated at Ser-136 by MAPK14/p38-alpha-activated MAPKAPK2/MK2; this phosphorylation is stress-dependent; this phosphorylation decreases its RNA-binding capacity therefore affecting RNA nuclear exosome-mediated degradation. This phosphorylation mediates YWHAE and YWHAZ interactions.

It is found in the nucleus. The protein resides in the nucleoplasm. Functionally, RNA-binding subunit of the trimeric nuclear exosome targeting (NEXT) complex, a complex that functions as an RNA exosome cofactor that directs a subset of non-coding short-lived RNAs for exosomal degradation. NEXT is involved in surveillance and turnover of aberrant transcripts and non-coding RNAs. Binds preferentially polyuridine sequences and associates with newly synthesized RNAs, including pre-mRNAs and short-lived exosome substrates such as promoter upstream transcripts (PROMPTs), enhancer RNAs (eRNAs), and 3'-extended products from small nuclear RNAs (snRNAs). Participates in several biological processes including DNA damage response (DDR) and stress response. During stress response, activation of the p38MAPK-MK2 pathway decreases RBM7-RNA-binding and subsequently the RNA exosome degradation activities, thereby modulating the turnover of non-coding transcriptome. Participates in DNA damage response (DDR), through its interaction with MEPCE and LARP7, the core subunits of 7SK snRNP complex, that release the positive transcription elongation factor b (P-TEFb) complex from the 7SK snRNP. In turn, activation of P-TEFb complex induces the transcription of P-TEFb-dependent DDR genes to promote cell viability. This Mus musculus (Mouse) protein is RNA-binding protein 7.